Consider the following 158-residue polypeptide: NADH-quinone oxidoreductase subunit B (158 aa).

Residues cysteine 37, cysteine 38, cysteine 102, and cysteine 132 each contribute to the [4Fe-4S] cluster site.

Belongs to the complex I 20 kDa subunit family. NDH-1 is composed of 14 different subunits. Subunits NuoB, C, D, E, F, and G constitute the peripheral sector of the complex. It depends on [4Fe-4S] cluster as a cofactor.

The protein localises to the cell inner membrane. It carries out the reaction a quinone + NADH + 5 H(+)(in) = a quinol + NAD(+) + 4 H(+)(out). In terms of biological role, NDH-1 shuttles electrons from NADH, via FMN and iron-sulfur (Fe-S) centers, to quinones in the respiratory chain. Couples the redox reaction to proton translocation (for every two electrons transferred, four hydrogen ions are translocated across the cytoplasmic membrane), and thus conserves the redox energy in a proton gradient. The sequence is that of NADH-quinone oxidoreductase subunit B from Methylobacillus flagellatus (strain ATCC 51484 / DSM 6875 / VKM B-1610 / KT).